The sequence spans 208 residues: Guanylate kinase (208 aa).

The Guanylate kinase-like domain occupies 4–181; sequence GLLIVISGPS…AVEKIQSIIS (178 aa). 11 to 18 is a binding site for ATP; that stretch reads GPSGTGKG.

Belongs to the guanylate kinase family.

It localises to the cytoplasm. It carries out the reaction GMP + ATP = GDP + ADP. Functionally, essential for recycling GMP and indirectly, cGMP. In Clostridium tetani (strain Massachusetts / E88), this protein is Guanylate kinase.